The sequence spans 149 residues: Myoglobin (149 aa).

Thr-2 carries the N-acetylthreonine modification. The 142-residue stretch at 2-143 (TEWEHVNKVW…ICSDLETLYK (142 aa)) folds into the Globin domain. Nitrite is bound at residue His-60. His-60 is a binding site for O2. Residue His-89 coordinates heme b.

Belongs to the globin family. In terms of assembly, monomeric.

The protein resides in the cytoplasm. The protein localises to the sarcoplasm. The catalysed reaction is Fe(III)-heme b-[protein] + nitric oxide + H2O = Fe(II)-heme b-[protein] + nitrite + 2 H(+). It carries out the reaction H2O2 + AH2 = A + 2 H2O. In terms of biological role, monomeric heme protein which primary function is to store oxygen and facilitate its diffusion within muscle tissues. Reversibly binds oxygen through a pentacoordinated heme iron and enables its timely and efficient release as needed during periods of heightened demand. Depending on the oxidative conditions of tissues and cells, and in addition to its ability to bind oxygen, it also has a nitrite reductase activity whereby it regulates the production of bioactive nitric oxide. Under stress conditions, like hypoxia and anoxia, it also protects cells against reactive oxygen species thanks to its pseudoperoxidase activity. The sequence is that of Myoglobin (mb) from Heterodontus portusjacksoni (Port Jackson shark).